Reading from the N-terminus, the 254-residue chain is Ribosomal RNA small subunit methyltransferase J (254 aa).

S-adenosyl-L-methionine is bound by residues 107 to 108 (RD), 123 to 124 (ER), and D174.

This sequence belongs to the methyltransferase superfamily. RsmJ family.

The protein localises to the cytoplasm. The catalysed reaction is guanosine(1516) in 16S rRNA + S-adenosyl-L-methionine = N(2)-methylguanosine(1516) in 16S rRNA + S-adenosyl-L-homocysteine + H(+). In terms of biological role, specifically methylates the guanosine in position 1516 of 16S rRNA. This Coxiella burnetii (strain Dugway 5J108-111) protein is Ribosomal RNA small subunit methyltransferase J.